The chain runs to 378 residues: Ribosomal RNA large subunit methyltransferase G (378 aa).

This sequence belongs to the methyltransferase superfamily. RlmG family.

It is found in the cytoplasm. It catalyses the reaction guanosine(1835) in 23S rRNA + S-adenosyl-L-methionine = N(2)-methylguanosine(1835) in 23S rRNA + S-adenosyl-L-homocysteine + H(+). Its function is as follows. Specifically methylates the guanine in position 1835 (m2G1835) of 23S rRNA. This is Ribosomal RNA large subunit methyltransferase G from Shewanella baltica (strain OS185).